The chain runs to 123 residues: Ribonuclease P protein component (123 aa).

Belongs to the RnpA family. As to quaternary structure, consists of a catalytic RNA component (M1 or rnpB) and a protein subunit.

It carries out the reaction Endonucleolytic cleavage of RNA, removing 5'-extranucleotides from tRNA precursor.. RNaseP catalyzes the removal of the 5'-leader sequence from pre-tRNA to produce the mature 5'-terminus. It can also cleave other RNA substrates such as 4.5S RNA. The protein component plays an auxiliary but essential role in vivo by binding to the 5'-leader sequence and broadening the substrate specificity of the ribozyme. This chain is Ribonuclease P protein component, found in Streptomyces griseus subsp. griseus (strain JCM 4626 / CBS 651.72 / NBRC 13350 / KCC S-0626 / ISP 5235).